A 197-amino-acid chain; its full sequence is 3-isopropylmalate dehydratase small subunit (197 aa).

It belongs to the LeuD family. LeuD type 1 subfamily. Heterodimer of LeuC and LeuD.

The enzyme catalyses (2R,3S)-3-isopropylmalate = (2S)-2-isopropylmalate. It functions in the pathway amino-acid biosynthesis; L-leucine biosynthesis; L-leucine from 3-methyl-2-oxobutanoate: step 2/4. Catalyzes the isomerization between 2-isopropylmalate and 3-isopropylmalate, via the formation of 2-isopropylmaleate. The sequence is that of 3-isopropylmalate dehydratase small subunit from Geobacillus sp. (strain WCH70).